We begin with the raw amino-acid sequence, 460 residues long: Interleukin-6 receptor subunit alpha (460 aa).

The first 19 residues, 1 to 19 (MLTVGCTLLVALLAAPAVA), serve as a signal peptide directing secretion. Positions 20-116 (LVLGSCRALE…DVPPEEPKLS (97 aa)) constitute an Ig-like C2-type domain. Residues 20-364 (LVLGSCRALE…VQESSSMSLP (345 aa)) are Extracellular-facing. 4 disulfides stabilise this stretch: C25–C190, C47–C92, C117–C128, and C162–C173. N-linked (GlcNAc...) asparagine glycans are attached at residues N32 and N55. Fibronectin type-III domains follow at residues 109-214 (PPEE…VQPD) and 215-313 (PPAN…TPWI). N150 carries N-linked (GlcNAc...) asparagine glycosylation. N-linked (GlcNAc...) asparagine glycosylation occurs at N218. A WSXWS motif motif is present at residues 300–304 (WSEWS). A helical transmembrane segment spans residues 365-385 (TFLVAGGSLAFGLLLCVFIIL). The Cytoplasmic segment spans residues 386–460 (RLKQKWKSEA…NSNRDYLFPR (75 aa)).

This sequence belongs to the type I cytokine receptor family. Type 3 subfamily. In terms of assembly, component of a hexamer of two molecules each of IL6, IL6R and IL6ST; first binds to IL6 to associate with the signaling subunit IL6ST. Interacts (via N-terminal ectodomain) with SORL1; this interaction may affect IL6-binding to IL6R, hence decrease IL6 'classic-signaling'. As to quaternary structure, also interacts with SORL1; this interaction leads to soluble IL6R internalization. May form a trimeric complex with the soluble SORL1 ectodomain and circulating IL6 receptor; this interaction might stabilize circulating IL6, hence promote IL6 'trans-signaling'. In terms of processing, a short soluble form is also released from the membrane by proteolysis. The sIL6R is formed by limited proteolysis of membrane-bound receptors, a process referred to as ectodomain shedding. mIL6R is cleaved by the proteases ADAM10 and ADAM17. Glycosylated. Glycosylation is dispensable for transport, signaling, and cell-surface turnover. Glycosylation at Asn-55 is a protease-regulatory exosite. Glycosylation is required for ADAM17-mediated proteolysis. Expressed by dendritic cells. As to expression, detected in the cerebrospinal fluid.

It is found in the cell membrane. It localises to the secreted. Classic and trans-signaling are both inhibited by tocilizumab, a humanized monoclonal antibody that blocks interleukin IL6R signaling. Functionally, part of the receptor for interleukin 6. Binds to IL6 with low affinity, but does not transduce a signal. Signal activation necessitate an association with IL6ST. Activation leads to the regulation of the immune response, acute-phase reactions and hematopoiesis. The interaction with membrane-bound IL6R and IL6ST stimulates 'classic signaling', the restricted expression of the IL6R limits classic IL6 signaling to only a few tissues such as the liver and some cells of the immune system. Whereas the binding of IL6 and soluble IL6R to IL6ST stimulates 'trans-signaling'. Alternatively, 'cluster signaling' occurs when membrane-bound IL6:IL6R complexes on transmitter cells activate IL6ST receptors on neighboring receiver cells. Signaling via the membrane-bound IL6R is mostly regenerative and anti-inflammatory. Drives naive CD4(+) T cells to the Th17 lineage, through 'cluster signaling' by dendritic cells. Its function is as follows. Soluble form of IL6 receptor (sIL6R) that acts as an agonist of IL6 activity. The IL6:sIL6R complex (hyper-IL6) binds to IL6ST/gp130 on cell surfaces and induces signaling also on cells that do not express membrane-bound IL6R in a process called IL6 'trans-signaling'. sIL6R is causative for the pro-inflammatory properties of IL6 and an important player in the development of chronic inflammatory diseases. In complex with IL6, is required for induction of VEGF production. Plays a protective role during liver injury, being required for maintenance of tissue regeneration. 'Trans-signaling' in central nervous system regulates energy and glucose homeostasis. The sequence is that of Interleukin-6 receptor subunit alpha from Mus musculus (Mouse).